An 86-amino-acid polypeptide reads, in one-letter code: Cell division topological specificity factor (86 aa).

This sequence belongs to the MinE family.

Its function is as follows. Prevents the cell division inhibition by proteins MinC and MinD at internal division sites while permitting inhibition at polar sites. This ensures cell division at the proper site by restricting the formation of a division septum at the midpoint of the long axis of the cell. This is Cell division topological specificity factor from Stenotrophomonas maltophilia (strain R551-3).